Reading from the N-terminus, the 156-residue chain is ATP synthase subunit b (156 aa).

A helical membrane pass occupies residues 12–32; that stretch reads VAFFIFVLFCMKYVWPPVIAA.

The protein belongs to the ATPase B chain family. As to quaternary structure, F-type ATPases have 2 components, F(1) - the catalytic core - and F(0) - the membrane proton channel. F(1) has five subunits: alpha(3), beta(3), gamma(1), delta(1), epsilon(1). F(0) has three main subunits: a(1), b(2) and c(10-14). The alpha and beta chains form an alternating ring which encloses part of the gamma chain. F(1) is attached to F(0) by a central stalk formed by the gamma and epsilon chains, while a peripheral stalk is formed by the delta and b chains.

The protein localises to the cell inner membrane. Functionally, f(1)F(0) ATP synthase produces ATP from ADP in the presence of a proton or sodium gradient. F-type ATPases consist of two structural domains, F(1) containing the extramembraneous catalytic core and F(0) containing the membrane proton channel, linked together by a central stalk and a peripheral stalk. During catalysis, ATP synthesis in the catalytic domain of F(1) is coupled via a rotary mechanism of the central stalk subunits to proton translocation. Its function is as follows. Component of the F(0) channel, it forms part of the peripheral stalk, linking F(1) to F(0). This Pseudomonas syringae pv. tomato (strain ATCC BAA-871 / DC3000) protein is ATP synthase subunit b.